Reading from the N-terminus, the 348-residue chain is Protein-arginine N-acetylglucosaminyltransferase SseK2 (348 aa).

Residues 64-66, Y88, and 237-240 contribute to the UDP-N-acetyl-alpha-D-glucosamine site; these read QWF and YLDA. The short motif at 239–241 is the DXD motif element; it reads DAD. D241 lines the Mn(2+) pocket. E271 acts as the Proton acceptor in catalysis. Residues N338, S340, and 345–348 contribute to the UDP-N-acetyl-alpha-D-glucosamine site; that span reads SSWR. N338 and S340 together coordinate Mn(2+).

The protein belongs to the glycosyltransferase NleB family. It depends on Mn(2+) as a cofactor.

The protein localises to the secreted. The protein resides in the host Golgi apparatus. It catalyses the reaction L-arginyl-[protein] + UDP-N-acetyl-alpha-D-glucosamine = N(omega)-(N-acetyl-beta-D-glucosaminyl)-L-arginyl-[protein] + UDP + H(+). Its activity is regulated as follows. Protein-arginine N-acetylglucosaminyltransferase activity is inhibited by 100066N compound (flavone analog) and 102644N compound (a substituted isoxazole). Protein-arginine N-acetylglucosaminyltransferase effector that catalyzes the transfer of a single N-acetylglucosamine (GlcNAc) to a conserved arginine residue in the death domain of host proteins such as FADD: arginine GlcNAcylation prevents homotypic/heterotypic death domain interactions. Also acts on host proteins without a death domain: catalyzes arginine GlcNAcylation of host small Rab1 GTPase, thereby preventing GTPase activity and leading to impaired host vesicular protein transport. In contrast to Ssek1, not able to disrupt TNF signaling in infected cells. This Salmonella typhimurium (strain SL1344) protein is Protein-arginine N-acetylglucosaminyltransferase SseK2.